The following is a 136-amino-acid chain: Keratin-associated protein 15-1 (136 aa).

It belongs to the PMG family. As to quaternary structure, interacts with hair keratins.

Its function is as follows. In the hair cortex, hair keratin intermediate filaments are embedded in an interfilamentous matrix, consisting of hair keratin-associated proteins (KRTAP), which are essential for the formation of a rigid and resistant hair shaft through their extensive disulfide bond cross-linking with abundant cysteine residues of hair keratins. The matrix proteins include the high-sulfur and high-glycine-tyrosine keratins. The sequence is that of Keratin-associated protein 15-1 (KRTAP15-1) from Capra hircus (Goat).